Reading from the N-terminus, the 892-residue chain is Inner centromere protein B (892 aa).

8 disordered regions span residues 50–124, 160–182, 255–286, 305–470, 502–555, 569–687, 702–760, and 797–819; these read AEPE…KRMT, EHER…EMKT, LVNE…SLVV, KRES…PPPH, KRNT…RRED, QLEE…RERE, ERAA…AAAA, and NYGM…KPIP. A compositionally biased stretch (basic residues) spans 60–69; that stretch reads SQKRRRKKRT. Residues 90 to 99 are compositionally biased toward low complexity; that stretch reads SANWSSSVRR. The span at 259–272 shows a compositional bias: polar residues; it reads QPLNLSNESATPTG. The segment covering 305–315 has biased composition (basic and acidic residues); sequence KRESMTREAVR. The span at 316–326 shows a compositional bias: basic residues; that stretch reads KSIRQSISKKK. The span at 332–343 shows a compositional bias: low complexity; sequence SSTSSQRSCHSS. The span at 431-444 shows a compositional bias: basic and acidic residues; the sequence is RAVDELSDDERPSE. Residues 455–470 are compositionally biased toward pro residues; the sequence is PSPPCPPSKIVKPPPH. Basic and acidic residues-rich tracts occupy residues 509–555, 569–602, 609–687, and 702–754; these read PDPK…RRED, QLEE…EEKA, KKQE…RERE, and ERAA…KAKE. The SAH stretch occupies residues 512–725; that stretch reads KSEEKERQRL…EERKKREQQQ (214 aa). The segment at 802-876 is IN box; that stretch reads LNSDDSTDDE…RTSSAVWHSP (75 aa). 2 positions are modified to phosphoserine: Ser-869 and Ser-870.

Belongs to the INCENP family. In terms of assembly, component of the CPC at least composed of survivin/birc5, incenp, cdca8/borealin and/or cdca9/dasra-A, and aurkb/aurora-B. Interacts (via C-terminus) with aurkb (via N-terminus and kinase domain). Interacts (via N-terminus) with birc5.1, birc5.2, cdca8 and cdca9. Interacts with mtus1.

The protein localises to the nucleus. The protein resides in the chromosome. It is found in the centromere. Its subcellular location is the cytoplasm. It localises to the cytoskeleton. The protein localises to the spindle. The protein resides in the midbody. It is found in the kinetochore. In terms of biological role, component of the chromosomal passenger complex (CPC), a complex that acts as a key regulator of mitosis. The CPC complex has essential functions at the centromere in ensuring correct chromosome alignment and segregation and is required for chromatin-induced microtubule stabilization and spindle assembly. Acts as a scaffold regulating CPC localization and activity. The C-terminus associates with aurkb/aurora-B, the N-terminus associated with cdca8/borealin and/or cdca9/dasra-A tethers the CPC to the inner centromere, and the microtubule binding activity within the central SAH domain directs aurkb/aurora-B toward substrates near microtubules. Activates aurkb. The protein is Inner centromere protein B (incenp-b) of Xenopus laevis (African clawed frog).